We begin with the raw amino-acid sequence, 427 residues long: UDP-N-acetyl-D-mannosamine dehydrogenase (427 aa).

NAD(+) is bound by residues Y19, I20, D39, R44, T91, and T130. The UDP-N-acetyl-alpha-D-mannosaminouronate site is built by R155, V156, K207, N211, R214, H245, R247, and G258. K207 serves as the catalytic Proton donor/acceptor. The Nucleophile role is filled by C261. UDP-N-acetyl-alpha-D-mannosaminouronate-binding residues include Y318 and K319. Residue R326 coordinates NAD(+). Residue K404 coordinates UDP-N-acetyl-alpha-D-mannosaminouronate.

The protein belongs to the UDP-glucose/GDP-mannose dehydrogenase family. In terms of assembly, homotetramer; probably dimer of dimers.

It carries out the reaction UDP-N-acetyl-alpha-D-mannosamine + 2 NAD(+) + H2O = UDP-N-acetyl-alpha-D-mannosaminouronate + 2 NADH + 3 H(+). In terms of biological role, catalyzes the four-electron oxidation of UDP-N-acetyl-D-mannosamine (UDP-ManNAc), reducing NAD(+) and releasing UDP-N-acetylmannosaminuronic acid (UDP-ManNAcA). Cannot use NADP instead of NAD. The sequence is that of UDP-N-acetyl-D-mannosamine dehydrogenase (wecC) from Methanococcus maripaludis (strain DSM 14266 / JCM 13030 / NBRC 101832 / S2 / LL).